We begin with the raw amino-acid sequence, 1447 residues long: Gag-Pol polyprotein (1447 aa).

Residue Gly2 is the site of N-myristoyl glycine; by host attachment. An interaction with Gp41 region spans residues 7 to 31 (VLSGGELDRWEKIRLRPGGKKKYKL). Positions 8 to 43 (LSGGELDRWEKIRLRPGGKKKYKLKHIVWASRELER) are interaction with host CALM1. Residues 12-19 (ELDRWEKI) are interaction with host AP3D1. Residues 14-33 (DRWEKIRLRPGGKKKYKLKH) are interaction with membrane phosphatidylinositol 4,5-bisphosphate and RNA. A Nuclear export signal motif is present at residues 16–22 (WEKIRLR). The Nuclear localization signal signature appears at 26-32 (KKKYKLK). The interval 73 to 77 (EELRS) is interaction with membrane phosphatidylinositol 4,5-bisphosphate. Residues 106–128 (EEQNKSKKKAQQAAADTGHSSQV) form a disordered region. The residue at position 132 (Tyr132) is a Phosphotyrosine; by host. An interaction with human PPIA/CYPA and NUP153 region spans residues 189–227 (NTVGGHQAAMQMLKETINEEAAEWDRVHPVHAGPIAPGQ). The segment at 277–363 (YSPTSILDIR…GGPGHKARVL (87 aa)) is dimerization/Multimerization of capsid protein p24. 2 CCHC-type zinc fingers span residues 390–407 (VKCF…NCRA) and 411–428 (KGCW…DCTE). The tract at residues 447–476 (EFSSEQTRANSPTISSEQTRANSPTRRELQ) is disordered. The segment covering 450-470 (SEQTRANSPTISSEQTRANSP) has biased composition (polar residues). The segment at 501 to 505 (PQITL) is dimerization of protease. The 70-residue stretch at 520–589 (KEALLDTGAD…TPVNIIGRNL (70 aa)) folds into the Peptidase A2 domain. Asp525 acts as the For protease activity; shared with dimeric partner in catalysis. 2 dimerization of protease regions span residues 549–555 (GIGGFIK) and 588–600 (NLLT…LNFP). The Reverse transcriptase domain maps to 643-833 (EGKISKIGPE…PPFLWMGYEL (191 aa)). Mg(2+) contacts are provided by Asp709, Asp784, and Asp785. Residues 826 to 834 (FLWMGYELH) are RT 'primer grip'. The short motif at 997–1013 (WETWWTEYWQATWIPEW) is the Tryptophan repeat motif element. One can recognise an RNase H type-1 domain in the interval 1033–1156 (IVGAETFYVD…VDKLVSAGIR (124 aa)). Positions 1042, 1077, 1097, and 1148 each coordinate Mg(2+). The segment at 1162 to 1203 (DGIDKAQDEHEKYHSNWRAMASDFNLPPVVAKEIVASCDKCQ) adopts an Integrase-type zinc-finger fold. His1171, His1175, Cys1199, and Cys1202 together coordinate Zn(2+). Positions 1213-1363 (VDCSPGIWQL…SAGERIVDII (151 aa)) constitute an Integrase catalytic domain. Positions 1223, 1275, and 1311 each coordinate Mg(2+). Residues 1382–1429 (FRVYYRDSRDPLWKGPAKLLWKGEGAVVIQDNSDIKVVPRRKAKIIRD) constitute a DNA-binding region (integrase-type).

Homotrimer; further assembles as hexamers of trimers. Interacts with gp41 (via C-terminus). Interacts with host CALM1; this interaction induces a conformational change in the Matrix protein, triggering exposure of the myristate group. Interacts with host AP3D1; this interaction allows the polyprotein trafficking to multivesicular bodies during virus assembly. Part of the pre-integration complex (PIC) which is composed of viral genome, matrix protein, Vpr and integrase. In terms of assembly, homodimer; the homodimer further multimerizes as homohexamers or homopentamers. Interacts with human PPIA/CYPA; This interaction stabilizes the capsid. Interacts with human NUP153. Interacts with host PDZD8; this interaction stabilizes the capsid. Interacts with monkey TRIM5; this interaction destabilizes the capsid. As to quaternary structure, homodimer, whose active site consists of two apposed aspartic acid residues. Heterodimer of p66 RT and p51 RT (RT p66/p51). Heterodimerization of RT is essential for DNA polymerase activity. The overall folding of the subdomains is similar in p66 RT and p51 RT but the spatial arrangements of the subdomains are dramatically different. In terms of assembly, homotetramer; may further associate as a homohexadecamer. Part of the pre-integration complex (PIC) which is composed of viral genome, matrix protein, Vpr and integrase. Interacts with human SMARCB1/INI1 and human PSIP1/LEDGF isoform 1. Interacts with human KPNA3; this interaction might play a role in nuclear import of the pre-integration complex. Interacts with human NUP153; this interaction might play a role in nuclear import of the pre-integration complex. Requires Mg(2+) as cofactor. In terms of processing, specific enzymatic cleavages by the viral protease yield mature proteins. The protease is released by autocatalytic cleavage. The polyprotein is cleaved during and after budding, this process is termed maturation. Proteolytic cleavage of p66 RT removes the RNase H domain to yield the p51 RT subunit. Nucleocapsid protein p7 might be further cleaved after virus entry. Post-translationally, tyrosine phosphorylated presumably in the virion by a host kinase. Phosphorylation is apparently not a major regulator of membrane association. Phosphorylated possibly by host MAPK1; this phosphorylation is necessary for Pin1-mediated virion uncoating. In terms of processing, methylated by host PRMT6, impairing its function by reducing RNA annealing and the initiation of reverse transcription.

The protein localises to the host cell membrane. It is found in the host endosome. It localises to the host multivesicular body. Its subcellular location is the virion membrane. The protein resides in the host nucleus. The protein localises to the host cytoplasm. It is found in the virion. The enzyme catalyses Specific for a P1 residue that is hydrophobic, and P1' variable, but often Pro.. It carries out the reaction Endohydrolysis of RNA in RNA/DNA hybrids. Three different cleavage modes: 1. sequence-specific internal cleavage of RNA. Human immunodeficiency virus type 1 and Moloney murine leukemia virus enzymes prefer to cleave the RNA strand one nucleotide away from the RNA-DNA junction. 2. RNA 5'-end directed cleavage 13-19 nucleotides from the RNA end. 3. DNA 3'-end directed cleavage 15-20 nucleotides away from the primer terminus.. The catalysed reaction is 3'-end directed exonucleolytic cleavage of viral RNA-DNA hybrid.. It catalyses the reaction DNA(n) + a 2'-deoxyribonucleoside 5'-triphosphate = DNA(n+1) + diphosphate. With respect to regulation, the viral protease is inhibited by many synthetic protease inhibitors (PIs), such as amprenavir, atazanavir, indinavir, loprinavir, nelfinavir, ritonavir and saquinavir. RT can be inhibited either by nucleoside RT inhibitors (NRTIs) or by non nucleoside RT inhibitors (NNRTIs). NRTIs act as chain terminators, whereas NNRTIs inhibit DNA polymerization by binding a small hydrophobic pocket near the RT active site and inducing an allosteric change in this region. Classical NRTIs are abacavir, adefovir (PMEA), didanosine (ddI), lamivudine (3TC), stavudine (d4T), tenofovir (PMPA), zalcitabine (ddC), and zidovudine (AZT). Classical NNRTIs are atevirdine (BHAP U-87201E), delavirdine, efavirenz (DMP-266), emivirine (I-EBU), and nevirapine (BI-RG-587). The tritherapies used as a basic effective treatment of AIDS associate two NRTIs and one NNRTI. Use of protease inhibitors in tritherapy regimens permit more ambitious therapeutic strategies. Its function is as follows. Gag-Pol polyprotein and Gag polyprotein may regulate their own translation, by the binding genomic RNA in the 5'-UTR. At low concentration, Gag-Pol and Gag would promote translation, whereas at high concentration, the polyproteins encapsidate genomic RNA and then shut off translation. Matrix protein p17 targets Gag and Gag-pol polyproteins to the plasma membrane via a multipartite membrane-binding signal, that includes its myristoylated N-terminus. Matrix protein is part of the pre-integration complex. Implicated in the release from host cell mediated by Vpu. Binds to RNA. Functionally, forms the conical core that encapsulates the genomic RNA-nucleocapsid complex in the virion. Most core are conical, with only 7% tubular. The core is constituted by capsid protein hexamer subunits. The core is disassembled soon after virion entry. Host restriction factors such as TRIM5-alpha or TRIMCyp bind retroviral capsids and cause premature capsid disassembly, leading to blocks in reverse transcription. Capsid restriction by TRIM5 is one of the factors which restricts HIV-1 to the human species. Host PIN1 apparently facilitates the virion uncoating. On the other hand, interactions with PDZD8 or CYPA stabilize the capsid. In terms of biological role, nucleocapsid protein p7 encapsulates and protects viral dimeric unspliced genomic RNA (gRNA). Binds these RNAs through its zinc fingers. Acts as a nucleic acid chaperone which is involved in rearangement of nucleic acid secondary structure during gRNA retrotranscription. Also facilitates template switch leading to recombination. As part of the polyprotein, participates in gRNA dimerization, packaging, tRNA incorporation and virion assembly. Its function is as follows. The aspartyl protease mediates proteolytic cleavages of Gag and Gag-Pol polyproteins during or shortly after the release of the virion from the plasma membrane. Cleavages take place as an ordered, step-wise cascade to yield mature proteins. This process is called maturation. Displays maximal activity during the budding process just prior to particle release from the cell. Also cleaves Nef and Vif, probably concomitantly with viral structural proteins on maturation of virus particles. Hydrolyzes host EIF4GI and PABP1 in order to shut off the capped cellular mRNA translation. The resulting inhibition of cellular protein synthesis serves to ensure maximal viral gene expression and to evade host immune response. Also mediates cleavage of host YTHDF3. Mediates cleavage of host CARD8, thereby activating the CARD8 inflammasome, leading to the clearance of latent HIV-1 in patient CD4(+) T-cells after viral reactivation; in contrast, HIV-1 can evade CARD8-sensing when its protease remains inactive in infected cells prior to viral budding. Reverse transcriptase/ribonuclease H (RT) is a multifunctional enzyme that converts the viral RNA genome into dsDNA in the cytoplasm, shortly after virus entry into the cell. This enzyme displays a DNA polymerase activity that can copy either DNA or RNA templates, and a ribonuclease H (RNase H) activity that cleaves the RNA strand of RNA-DNA heteroduplexes in a partially processive 3' to 5' endonucleasic mode. Conversion of viral genomic RNA into dsDNA requires many steps. A tRNA(3)-Lys binds to the primer-binding site (PBS) situated at the 5'-end of the viral RNA. RT uses the 3' end of the tRNA primer to perform a short round of RNA-dependent minus-strand DNA synthesis. The reading proceeds through the U5 region and ends after the repeated (R) region which is present at both ends of viral RNA. The portion of the RNA-DNA heteroduplex is digested by the RNase H, resulting in a ssDNA product attached to the tRNA primer. This ssDNA/tRNA hybridizes with the identical R region situated at the 3' end of viral RNA. This template exchange, known as minus-strand DNA strong stop transfer, can be either intra- or intermolecular. RT uses the 3' end of this newly synthesized short ssDNA to perform the RNA-dependent minus-strand DNA synthesis of the whole template. RNase H digests the RNA template except for two polypurine tracts (PPTs) situated at the 5'-end and near the center of the genome. It is not clear if both polymerase and RNase H activities are simultaneous. RNase H probably can proceed both in a polymerase-dependent (RNA cut into small fragments by the same RT performing DNA synthesis) and a polymerase-independent mode (cleavage of remaining RNA fragments by free RTs). Secondly, RT performs DNA-directed plus-strand DNA synthesis using the PPTs that have not been removed by RNase H as primers. PPTs and tRNA primers are then removed by RNase H. The 3' and 5' ssDNA PBS regions hybridize to form a circular dsDNA intermediate. Strand displacement synthesis by RT to the PBS and PPT ends produces a blunt ended, linear dsDNA copy of the viral genome that includes long terminal repeats (LTRs) at both ends. Functionally, catalyzes viral DNA integration into the host chromosome, by performing a series of DNA cutting and joining reactions. This enzyme activity takes place after virion entry into a cell and reverse transcription of the RNA genome in dsDNA. The first step in the integration process is 3' processing. This step requires a complex comprising the viral genome, matrix protein, Vpr and integrase. This complex is called the pre-integration complex (PIC). The integrase protein removes 2 nucleotides from each 3' end of the viral DNA, leaving recessed CA OH's at the 3' ends. In the second step, the PIC enters cell nucleus. This process is mediated through integrase and Vpr proteins, and allows the virus to infect a non dividing cell. This ability to enter the nucleus is specific of lentiviruses, other retroviruses cannot and rely on cell division to access cell chromosomes. In the third step, termed strand transfer, the integrase protein joins the previously processed 3' ends to the 5' ends of strands of target cellular DNA at the site of integration. The 5'-ends are produced by integrase-catalyzed staggered cuts, 5 bp apart. A Y-shaped, gapped, recombination intermediate results, with the 5'-ends of the viral DNA strands and the 3' ends of target DNA strands remaining unjoined, flanking a gap of 5 bp. The last step is viral DNA integration into host chromosome. This involves host DNA repair synthesis in which the 5 bp gaps between the unjoined strands are filled in and then ligated. Since this process occurs at both cuts flanking the HIV genome, a 5 bp duplication of host DNA is produced at the ends of HIV-1 integration. Alternatively, Integrase may catalyze the excision of viral DNA just after strand transfer, this is termed disintegration. The sequence is that of Gag-Pol polyprotein (gag-pol) from Homo sapiens (Human).